The primary structure comprises 645 residues: Cilia- and flagella-associated protein 221 homolog (645 aa).

Residues 381–408 (GGAVHQPSAPVGSSSSGGGGGSDPAFKP) form a disordered region. The interaction with calmodulin stretch occupies residues 428-435 (THQRLQRR).

Belongs to the PCDP1 family. As to quaternary structure, interacts with calmodulin; calcium-dependent. Part of the PDCP1 complex composed of CFAP46, CFAP54, CFAP74 and CFAP221; the PDCP1 complex binds calmodulin.

It is found in the cytoplasm. The protein localises to the cytoskeleton. The protein resides in the cilium axoneme. May play a role in cilium morphogenesis. In Chlamydomonas reinhardtii (Chlamydomonas smithii), this protein is Cilia- and flagella-associated protein 221 homolog.